The following is an 879-amino-acid chain: Beta-alanyl-bioamine nonribosomal peptide synthetase ebony (879 aa).

Positions 26 to 540 (FEEQQLRHAD…EHVPLLVNGK (515 aa)) are adenylation. Residues 573–650 (EDLKLTARDL…EIIEKMAANH (78 aa)) form the Carrier domain. Position 611 is an O-(pantetheine 4'-phosphoryl)serine (serine 611). The condensation stretch occupies residues 666 to 679 (LKMEAVPLRLEHRQ). A dopamine-binding site is contributed by glutamate 696. Glutamate 696 is a binding site for histamine. Beta-alanine-binding residues include threonine 825 and asparagine 827.

The protein belongs to the NRP synthetase family. Pantetheine 4'-phosphate is required as a cofactor. Mg(2+) serves as cofactor. In terms of tissue distribution, expressed in the optic neuropils in the lamina and in distinct cells at the distal border of the medulla cortex (at protein level). Expressed in the protocerebrum and thoracic ganglia (at protein level). Expressed in antennal lobes, antennal nerves and subesophagic ganglion (at protein level). Specifically, expressed in epithelial glial cells of the medulla that surround the synaptic cleft of photoreceptor axonal endings (at protein level). Expressed in some cells in the cuticle.

The protein localises to the cytoplasm. The catalysed reaction is histamine + beta-alanine + ATP = carcinine + AMP + diphosphate + H(+). It catalyses the reaction beta-alanine + ATP + H(+) = beta-alanyl-5'-AMP + diphosphate. It carries out the reaction beta-alanyl-5'-AMP + holo-[peptidyl-carrier protein] = beta-alanyl-[peptidyl-carrier protein] + AMP + H(+). The enzyme catalyses beta-alanyl-[peptidyl-carrier protein] + histamine = carcinine + holo-[peptidyl-carrier protein] + H(+). The catalysed reaction is dopamine + beta-alanine + ATP = beta-alanyl-dopamine + AMP + diphosphate + H(+). It catalyses the reaction beta-alanyl-[peptidyl-carrier protein] + dopamine = beta-alanyl-dopamine + holo-[peptidyl-carrier protein] + H(+). Nonribosomal peptide synthase which is required for the regulation of histamine and dopamine levels in various tissues through their condensation with beta-alanine. In epithelial glial cells, plays an essential role in the inactivation of histamine, the main neurotransmitter in the optical nerve system, by catalyzing the conversion of histamine into carcinine. In the cuticle, catalyzes the condensation of beta-alanine with dopamine to form beta-alanyl-dopamine (NBAD), a metabolite involved in the pigmentation and sclerotization of the insect cuticle. Also, regulates the cuticular hydrocarbon composition in females. Acts downstream of the body clock to regulate circadian behavioral rhythms. Can also condense beta-alanine with biogenic amines tyramine, octopamine, and serotonin in vitro. This is Beta-alanyl-bioamine nonribosomal peptide synthetase ebony from Drosophila melanogaster (Fruit fly).